The primary structure comprises 451 residues: Bifunctional protein GlmU (451 aa).

The interval M1 to K236 is pyrophosphorylase. Residues L17–G20, K31, Q79, G84–T85, Y105–D107, G144, E162, N177, and N234 contribute to the UDP-N-acetyl-alpha-D-glucosamine site. Position 107 (D107) interacts with Mg(2+). N234 provides a ligand contact to Mg(2+). The linker stretch occupies residues V237–N257. The N-acetyltransferase stretch occupies residues G258 to V451. Positions 323 and 341 each coordinate UDP-N-acetyl-alpha-D-glucosamine. Residue H353 is the Proton acceptor of the active site. UDP-N-acetyl-alpha-D-glucosamine contacts are provided by Y356 and N367. Residues A370, N376 to Y377, S395, A413, and R430 each bind acetyl-CoA.

This sequence in the N-terminal section; belongs to the N-acetylglucosamine-1-phosphate uridyltransferase family. In the C-terminal section; belongs to the transferase hexapeptide repeat family. Homotrimer. Mg(2+) serves as cofactor.

It is found in the cytoplasm. It carries out the reaction alpha-D-glucosamine 1-phosphate + acetyl-CoA = N-acetyl-alpha-D-glucosamine 1-phosphate + CoA + H(+). The enzyme catalyses N-acetyl-alpha-D-glucosamine 1-phosphate + UTP + H(+) = UDP-N-acetyl-alpha-D-glucosamine + diphosphate. It functions in the pathway nucleotide-sugar biosynthesis; UDP-N-acetyl-alpha-D-glucosamine biosynthesis; N-acetyl-alpha-D-glucosamine 1-phosphate from alpha-D-glucosamine 6-phosphate (route II): step 2/2. The protein operates within nucleotide-sugar biosynthesis; UDP-N-acetyl-alpha-D-glucosamine biosynthesis; UDP-N-acetyl-alpha-D-glucosamine from N-acetyl-alpha-D-glucosamine 1-phosphate: step 1/1. Its pathway is bacterial outer membrane biogenesis; LPS lipid A biosynthesis. Functionally, catalyzes the last two sequential reactions in the de novo biosynthetic pathway for UDP-N-acetylglucosamine (UDP-GlcNAc). The C-terminal domain catalyzes the transfer of acetyl group from acetyl coenzyme A to glucosamine-1-phosphate (GlcN-1-P) to produce N-acetylglucosamine-1-phosphate (GlcNAc-1-P), which is converted into UDP-GlcNAc by the transfer of uridine 5-monophosphate (from uridine 5-triphosphate), a reaction catalyzed by the N-terminal domain. This is Bifunctional protein GlmU from Granulibacter bethesdensis (strain ATCC BAA-1260 / CGDNIH1).